Consider the following 424-residue polypeptide: Tyrosine--tRNA ligase (424 aa).

Tyrosine 37 is an L-tyrosine binding site. The 'HIGH' region motif lies at 42–51 (PTADSLHLGH). Residues tyrosine 175 and glutamine 179 each coordinate L-tyrosine. Residues 235–239 (KFGKT) carry the 'KMSKS' region motif. Residue lysine 238 coordinates ATP. Residues 357 to 414 (ADLMQALVDAELQPSRGQARKTIASNAVTINGEKQSDPEYIFNDEDRLFGRYTLLRRG) enclose the S4 RNA-binding domain.

This sequence belongs to the class-I aminoacyl-tRNA synthetase family. TyrS type 1 subfamily. As to quaternary structure, homodimer.

Its subcellular location is the cytoplasm. The catalysed reaction is tRNA(Tyr) + L-tyrosine + ATP = L-tyrosyl-tRNA(Tyr) + AMP + diphosphate + H(+). Catalyzes the attachment of tyrosine to tRNA(Tyr) in a two-step reaction: tyrosine is first activated by ATP to form Tyr-AMP and then transferred to the acceptor end of tRNA(Tyr). This is Tyrosine--tRNA ligase from Salmonella agona (strain SL483).